Consider the following 402-residue polypeptide: Mitochondrial inner membrane protein OXA1 (402 aa).

The transit peptide at M1–F42 directs the protein to the mitochondrion. Residues N43–E118 lie on the Mitochondrial intermembrane side of the membrane. Residues A119–I139 traverse the membrane as a helical segment. Residues R140–R199 lie on the Mitochondrial matrix side of the membrane. Residues W200–H220 form a helical membrane-spanning segment. At M221–D239 the chain is on the mitochondrial intermembrane side. Residues L240–F260 traverse the membrane as a helical segment. Residues T261–P275 are Mitochondrial matrix-facing. A helical membrane pass occupies residues M276–M292. The Mitochondrial intermembrane segment spans residues N293–A297. A helical membrane pass occupies residues V298 to L316. Residues R317–K402 are Mitochondrial matrix-facing. Residues R366 to Q385 show a composition bias toward basic and acidic residues. A disordered region spans residues R366–N386.

Belongs to the OXA1/ALB3/YidC family. As to quaternary structure, interacts with the large ribosome subunit of mitochondrial ribosome. Interacts directly with MRP20. Interacts with OXA1.

The protein resides in the mitochondrion inner membrane. Mitochondrial inner membrane insertase that mediates the insertion of both mitochondrion-encoded precursors and nuclear-encoded proteins from the matrix into the inner membrane. Links mitoribosomes with the inner membrane. Forms pores capable of accommodating translocating protein segments. Essential for the activity and assembly of cytochrome c oxidase. Plays a central role in the translocation and export of the N-terminal part of the COX2 protein into the mitochondrial intermembrane space. This Saccharomyces cerevisiae (strain ATCC 204508 / S288c) (Baker's yeast) protein is Mitochondrial inner membrane protein OXA1.